The chain runs to 335 residues: DNA-directed RNA polymerase subunit alpha (335 aa).

The segment at 1 to 233 (MTAVNDFLTP…QQIAVFVDLE (233 aa)) is alpha N-terminal domain (alpha-NTD). Residues 247–335 (IDPILLRPVD…DDDRLNAKLR (89 aa)) are alpha C-terminal domain (alpha-CTD).

It belongs to the RNA polymerase alpha chain family. As to quaternary structure, homodimer. The RNAP catalytic core consists of 2 alpha, 1 beta, 1 beta' and 1 omega subunit. When a sigma factor is associated with the core the holoenzyme is formed, which can initiate transcription.

The catalysed reaction is RNA(n) + a ribonucleoside 5'-triphosphate = RNA(n+1) + diphosphate. Its function is as follows. DNA-dependent RNA polymerase catalyzes the transcription of DNA into RNA using the four ribonucleoside triphosphates as substrates. This chain is DNA-directed RNA polymerase subunit alpha, found in Alcanivorax borkumensis (strain ATCC 700651 / DSM 11573 / NCIMB 13689 / SK2).